The primary structure comprises 338 residues: MELRSGSVGSQAVARRMDGDSRDGGGGKDATGSEDYENLPTSASVSTHMTAGAMAGILEHSVMYPVDSVKTRMQSLSPDPKAQYTSIYGALKKIMRTEGFWRPLRGVNVMIMGAGPAHAMYFACYENMKRTLNDVFHHQGNSHLANGIAGSMATLLHDAVMNPAEVVKQRLQMYNSQHRSAISCIRTVWRTEGLGAFYRSYTTQLTMNIPFQSIHFITYEFLQEQVNPHRTYNPQSHIISGGLAGALAAAATTPLDVCKTLLNTQENVALSLANISGRLSGMANAFRTVYQLNGLAGYFKGIQARVIYQMPSTAISWSVYEFFKYFLTKRQLENRAPY.

Residues methionine 1 to serine 42 form a disordered region. Over residues arginine 15 to glycine 26 the composition is skewed to basic and acidic residues. Solcar repeat units lie at residues alanine 43–threonine 131, asparagine 141–glutamine 225, and tyrosine 232–phenylalanine 326. Transmembrane regions (helical) follow at residues valine 45 to tyrosine 64, glycine 106 to tyrosine 125, histidine 143 to asparagine 162, serine 200 to tyrosine 219, proline 234 to threonine 253, and glycine 301 to tyrosine 320.

It belongs to the mitochondrial carrier (TC 2.A.29) family. As to quaternary structure, interacts with ACB10; this interaction stabilizes SLC25A37 and enhances the function of SLC25A37 to import mitochondrial iron during erythroid differentiation.

It is found in the mitochondrion inner membrane. The catalysed reaction is Fe(2+)(in) = Fe(2+)(out). Mitochondrial iron transporter that specifically mediates iron uptake in developing erythroid cells, thereby playing an essential role in heme biosynthesis. This is Mitoferrin-1 (SLC25A37) from Homo sapiens (Human).